The chain runs to 429 residues: Citrate synthase (429 aa).

Catalysis depends on residues His306 and Asp364.

The protein belongs to the citrate synthase family.

It catalyses the reaction oxaloacetate + acetyl-CoA + H2O = citrate + CoA + H(+). The protein operates within carbohydrate metabolism; tricarboxylic acid cycle; isocitrate from oxaloacetate: step 1/2. This Rhizobium meliloti (strain 1021) (Ensifer meliloti) protein is Citrate synthase (gltA).